Here is a 303-residue protein sequence, read N- to C-terminus: 2-dehydropantoate 2-reductase (303 aa).

Residues 7-12 (GCGALG), asparagine 98, and alanine 122 contribute to the NADP(+) site. Asparagine 98 is a binding site for substrate. Catalysis depends on lysine 176, which acts as the Proton donor. The substrate site is built by asparagine 180, asparagine 184, asparagine 194, and serine 244. Glutamate 256 is a binding site for NADP(+).

This sequence belongs to the ketopantoate reductase family. Monomer.

It is found in the cytoplasm. It carries out the reaction (R)-pantoate + NADP(+) = 2-dehydropantoate + NADPH + H(+). Its pathway is cofactor biosynthesis; (R)-pantothenate biosynthesis; (R)-pantoate from 3-methyl-2-oxobutanoate: step 2/2. In terms of biological role, catalyzes the NADPH-dependent reduction of ketopantoate into pantoic acid. The chain is 2-dehydropantoate 2-reductase (panE) from Shigella flexneri.